The following is a 653-amino-acid chain: Rab11 family-interacting protein 5 (653 aa).

One can recognise a C2 domain in the interval 5-146 (RGAEPAAGPS…AGRAQHTQWY (142 aa)). A phosphoserine mark is found at Ser176, Ser283, Ser286, Ser307, Ser357, and Ser367. Positions 269 to 300 (GPGAELLTRSPSRSSWLSTEGGRDSAQSPKLF) are disordered. Residues 277-286 (RSPSRSSWLS) are compositionally biased toward polar residues. 2 disordered regions span residues 342-402 (HIYN…AVLG) and 415-548 (PGAS…RSSL). Positions 357-368 (SISGSLPSSGSL) are enriched in low complexity. The span at 375–387 (FSEEGPRSTDDTW) shows a compositional bias: basic and acidic residues. Ser391 and Ser395 each carry phosphoserine. Composition is skewed to basic and acidic residues over residues 420-430 (PGEEEGARLPE) and 447-460 (VAEK…ERKP). A phosphoserine mark is found at Ser494, Ser538, Ser547, and Ser553. In terms of domain architecture, FIP-RBD spans 586–648 (KDSAVLDQSA…ETSPTLLQIP (63 aa)).

Interacts with RAB11FIP4. Interacts with NAPG. Interacts with RO60. Interacts with RAB11A that has been activated by GTP binding. As to quaternary structure, (Microbial infection) Interacts with Kaposi's sarcoma-associated herpesvirus/HHV-8 protein ORF45; this interaction results in the lysosomal degradation of ORF45 and the inhibition of viral particle release. Post-translationally, phosphorylated on serine and threonine residues. Phosphorylation at Ser-357 is PKA-dependent. As to expression, detected at low levels in heart, brain, placenta, lung, liver, adipocytes, kidney, spleen, skeletal muscle and pancreas.

It localises to the cytoplasm. The protein resides in the recycling endosome membrane. Its subcellular location is the early endosome membrane. The protein localises to the golgi apparatus membrane. It is found in the cytoplasmic vesicle. It localises to the secretory vesicle membrane. The protein resides in the mitochondrion membrane. Its function is as follows. Rab effector involved in protein trafficking from apical recycling endosomes to the apical plasma membrane. Involved in insulin granule exocytosis. May regulate V-ATPase intracellular transport in response to extracellular acidosis. This is Rab11 family-interacting protein 5 from Homo sapiens (Human).